The primary structure comprises 194 residues: Small ribosomal subunit protein uS7 (194 aa).

Belongs to the universal ribosomal protein uS7 family. In terms of assembly, part of the 30S ribosomal subunit.

Its function is as follows. One of the primary rRNA binding proteins, it binds directly to 16S rRNA where it nucleates assembly of the head domain of the 30S subunit. Is located at the subunit interface close to the decoding center. The polypeptide is Small ribosomal subunit protein uS7 (Archaeoglobus fulgidus (strain ATCC 49558 / DSM 4304 / JCM 9628 / NBRC 100126 / VC-16)).